Here is a 226-residue protein sequence, read N- to C-terminus: Protein-L-isoaspartate(D-aspartate) O-methyltransferase (226 aa).

Residues 57–60 (VTIS), His65, Ser89, 115–116 (EH), 147–148 (DG), and Thr222 contribute to the S-adenosyl-L-homocysteine site. Residue Ser60 is part of the active site.

The protein belongs to the methyltransferase superfamily. L-isoaspartyl/D-aspartyl protein methyltransferase family. As to quaternary structure, monomer.

It is found in the cytoplasm. The protein resides in the cytosol. The enzyme catalyses [protein]-L-isoaspartate + S-adenosyl-L-methionine = [protein]-L-isoaspartate alpha-methyl ester + S-adenosyl-L-homocysteine. In terms of biological role, initiates the repair of damaged proteins by catalyzing methyl esterification of L-isoaspartyl and D-aspartyl residues produced by spontaneous isomerization and racemization of L-aspartyl and L-asparaginyl residues in aging peptides and proteins. The chain is Protein-L-isoaspartate(D-aspartate) O-methyltransferase (Pcmt) from Drosophila melanogaster (Fruit fly).